Consider the following 617-residue polypeptide: Chaperone protein HscA homolog (617 aa).

This sequence belongs to the heat shock protein 70 family.

Probable chaperone. Has a low intrinsic ATPase activity which is markedly stimulated by HscB. The chain is Chaperone protein HscA homolog from Vibrio parahaemolyticus serotype O3:K6 (strain RIMD 2210633).